Consider the following 230-residue polypeptide: Large ribosomal subunit protein uL1 (230 aa).

Belongs to the universal ribosomal protein uL1 family. As to quaternary structure, part of the 50S ribosomal subunit.

Binds directly to 23S rRNA. The L1 stalk is quite mobile in the ribosome, and is involved in E site tRNA release. Its function is as follows. Protein L1 is also a translational repressor protein, it controls the translation of the L11 operon by binding to its mRNA. In Bacillus mycoides (strain KBAB4) (Bacillus weihenstephanensis), this protein is Large ribosomal subunit protein uL1.